The chain runs to 299 residues: Acetylglutamate kinase (299 aa).

Residues 70 to 71, arginine 92, and asparagine 186 each bind substrate; that span reads GG.

This sequence belongs to the acetylglutamate kinase family. ArgB subfamily.

The protein localises to the cytoplasm. It catalyses the reaction N-acetyl-L-glutamate + ATP = N-acetyl-L-glutamyl 5-phosphate + ADP. It functions in the pathway amino-acid biosynthesis; L-arginine biosynthesis; N(2)-acetyl-L-ornithine from L-glutamate: step 2/4. In terms of biological role, catalyzes the ATP-dependent phosphorylation of N-acetyl-L-glutamate. The protein is Acetylglutamate kinase of Petrotoga mobilis (strain DSM 10674 / SJ95).